A 248-amino-acid polypeptide reads, in one-letter code: PF03932 family protein CutC (248 aa).

This sequence belongs to the CutC family. Homodimer.

It is found in the cytoplasm. This chain is PF03932 family protein CutC, found in Escherichia coli O139:H28 (strain E24377A / ETEC).